Here is a 273-residue protein sequence, read N- to C-terminus: 2,3,4,5-tetrahydropyridine-2,6-dicarboxylate N-succinyltransferase (273 aa).

R104 and D141 together coordinate substrate.

It belongs to the transferase hexapeptide repeat family. Homotrimer.

The protein resides in the cytoplasm. The catalysed reaction is (S)-2,3,4,5-tetrahydrodipicolinate + succinyl-CoA + H2O = (S)-2-succinylamino-6-oxoheptanedioate + CoA. It participates in amino-acid biosynthesis; L-lysine biosynthesis via DAP pathway; LL-2,6-diaminopimelate from (S)-tetrahydrodipicolinate (succinylase route): step 1/3. In Psychrobacter arcticus (strain DSM 17307 / VKM B-2377 / 273-4), this protein is 2,3,4,5-tetrahydropyridine-2,6-dicarboxylate N-succinyltransferase.